The sequence spans 700 residues: Calpain-2 catalytic subunit (700 aa).

A propeptide spans 2–19 (AGMAAALAKERAAAAGAG) (anchors to the small subunit). Positions 45–344 (LFHDPSFPAG…YSRLEICNLT (300 aa)) constitute a Calpain catalytic domain. Positions 91 and 96 each coordinate Ca(2+). The active site involves cysteine 105. Ca(2+) contacts are provided by glutamate 175, glutamine 229, and lysine 230. Active-site residues include histidine 262 and asparagine 286. Ca(2+)-binding residues include glutamate 292, aspartate 299, and glutamate 323. The interval 345–514 (PDTLASDRYK…KNANSTVIDD (170 aa)) is domain III. The tract at residues 515–529 (EIEANFEETEIDEDD) is linker. The domain IV stretch occupies residues 530 to 700 (IEPSFKKLFG…LINWLFFTVI (171 aa)). 16 residues coordinate Ca(2+): alanine 542, aspartate 545, glutamate 547, glutamate 552, aspartate 585, aspartate 587, serine 589, lysine 591, glutamate 596, aspartate 615, aspartate 617, serine 619, threonine 621, glutamate 626, aspartate 658, and asparagine 661. 2 consecutive EF-hand domains span residues 572 to 605 (FSIETCKIMVDLLDNDGSGKLGLKEFHTLWTKIQ) and 602 to 637 (TKIQKYQKIYREIDVDRSGTMNSYEMRRALEAAGFK). Positions 667–700 (IRLETLYKMFRKLDTEKTGTIELNLINWLFFTVI) constitute an EF-hand 3 domain.

The protein belongs to the peptidase C2 family. As to quaternary structure, forms a heterodimer with a small (regulatory) subunit (CAPNS1). Requires Ca(2+) as cofactor. Ubiquitous.

Its subcellular location is the cytoplasm. It is found in the cell membrane. It catalyses the reaction Broad endopeptidase specificity.. With respect to regulation, activated by 200-1000 micromolar concentrations of calcium and inhibited by calpastatin. In terms of biological role, calcium-regulated non-lysosomal thiol-protease which catalyze limited proteolysis of substrates involved in cytoskeletal remodeling and signal transduction. The polypeptide is Calpain-2 catalytic subunit (CAPN2) (Gallus gallus (Chicken)).